Reading from the N-terminus, the 238-residue chain is Small ribosomal subunit protein uS2 (238 aa).

This sequence belongs to the universal ribosomal protein uS2 family.

The polypeptide is Small ribosomal subunit protein uS2 (Synechococcus sp. (strain CC9311)).